A 539-amino-acid polypeptide reads, in one-letter code: Glycerophosphoinositol inositolphosphodiesterase GDPD2 (539 aa).

The Cytoplasmic portion of the chain corresponds to 1-40; it reads MADSPGCCSIWARCLHCLYSCHWRKYPKQKMQTSKCDCIW. The chain crosses the membrane as a helical span at residues 41–61; the sequence is FGLLFLTFLLSLGWLYIGLIL. Residues 62–83 lie on the Extracellular side of the membrane; it reads LNDLHNFNEFLFRHWGHWMDWS. Residues 84–104 form a helical membrane-spanning segment; the sequence is LIVLLVVSLLVTYASLLLLLG. Residues 105 to 121 lie on the Cytoplasmic side of the membrane; that stretch reads LLLQLCGQPLHLHSLHK. A helical transmembrane segment spans residues 122-142; sequence VLLLLIVLLVAAGLVGLDIQW. Residues 143–154 are Extracellular-facing; it reads RQEWHSLRLSLQ. Residues 155 to 175 form a helical membrane-spanning segment; it reads ATAPFLHIGAVAGITLLAWPV. The Cytoplasmic portion of the chain corresponds to 176–189; sequence ADTFYRIHPRGPKV. Residues 190–210 traverse the membrane as a helical segment; it reads LLLLLFFGVTLVIYLMPLLFI. At 211-491 the chain is on the extracellular side; sequence SSPCIMKLRD…PLWLLPPQKY (281 aa). Positions 225–480 constitute a GP-PDE domain; it reads PGLVGHRGAP…NACQLLQQMQ (256 aa). Positions 257, 259, and 272 each coordinate a divalent metal cation. N-linked (GlcNAc...) asparagine glycosylation occurs at Asn333. Residues 492-512 traverse the membrane as a helical segment; it reads LMIWVITDCASILLLLSIFLL. The Cytoplasmic segment spans residues 513-539; the sequence is RGGCAKRNRTGLETAVLLTKINNFASE.

This sequence belongs to the glycerophosphoryl diester phosphodiesterase family. Ca(2+) is required as a cofactor. Detected in spleen, femur and calvaria.

The protein resides in the cell membrane. Its subcellular location is the cytoplasm. It is found in the cytoskeleton. It carries out the reaction sn-glycero-3-phospho-1D-myo-inositol + H2O = 1D-myo-inositol 1-phosphate + glycerol + H(+). In terms of biological role, has glycerophosphoinositol inositolphosphodiesterase activity and specifically hydrolyzes glycerophosphoinositol, with no activity for other substrates such as glycerophosphoinositol 4-phosphate, glycerophosphocholine, glycerophosphoethanolamine, and glycerophosphoserine. Accelerates the program of osteoblast differentiation and growth. May play a role in remodeling of the actin cytoskeleton. The sequence is that of Glycerophosphoinositol inositolphosphodiesterase GDPD2 (Gdpd2) from Mus musculus (Mouse).